The primary structure comprises 220 residues: Inner membrane-spanning protein YciB (220 aa).

The next 6 membrane-spanning stretches (helical) occupy residues 20-40, 57-77, 86-106, 123-143, 156-176, and 187-207; these read EVPPLLKLALELGPLLVFFFA, IGAPIFLATALFMAATVIALA, LPIMPLVSGIVVLVFGALTLW, LFGGILLGGLFFGKSLLGYVF, KLTLRWALFFIFLAIVNEIVW, and FKVWGIMPITIVFTLLQMPLI.

This sequence belongs to the YciB family.

It localises to the cell inner membrane. In terms of biological role, plays a role in cell envelope biogenesis, maintenance of cell envelope integrity and membrane homeostasis. The sequence is that of Inner membrane-spanning protein YciB from Brucella melitensis biotype 2 (strain ATCC 23457).